A 318-amino-acid polypeptide reads, in one-letter code: Probable tyrosine phosphatase protein N1 (318 aa).

The region spanning 26-292 is the Tyrosine-protein phosphatase domain; it reads IVRLEHHQVI…LILQPGYYVL (267 aa). The active-site Phosphocysteine intermediate is the Cys233.

The protein belongs to the protein-tyrosine phosphatase family.

The enzyme catalyses O-phospho-L-tyrosyl-[protein] + H2O = L-tyrosyl-[protein] + phosphate. This is Probable tyrosine phosphatase protein N1 (N3) from Microplitis demolitor bracovirus (isolate Webb) (MdBV).